Consider the following 203-residue polypeptide: Microtubule-associated protein Jupiter (203 aa).

Residue serine 30 is modified to Phosphoserine. A phosphothreonine mark is found at threonine 41 and threonine 102. Over residues 123–132 (LISKGNYNGK) the composition is skewed to polar residues. Disordered stretches follow at residues 123–163 (LISK…GNPV) and 182–203 (NGGS…SGLW). Positions 133-146 (SGSVSSASSSVSSS) are enriched in low complexity. Serine 135 and serine 146 each carry phosphoserine.

The protein belongs to the MAP Jupiter family.

Its subcellular location is the nucleus. It localises to the cytoplasm. It is found in the cytoskeleton. The protein localises to the spindle. In terms of biological role, binds to all microtubule populations. The sequence is that of Microtubule-associated protein Jupiter from Drosophila mojavensis (Fruit fly).